The sequence spans 279 residues: Ribosomal RNA small subunit methyltransferase A (279 aa).

S-adenosyl-L-methionine-binding residues include His-15, Leu-17, Gly-42, Glu-64, Asp-89, and Asn-109.

The protein belongs to the class I-like SAM-binding methyltransferase superfamily. rRNA adenine N(6)-methyltransferase family. RsmA subfamily.

The protein resides in the cytoplasm. The catalysed reaction is adenosine(1518)/adenosine(1519) in 16S rRNA + 4 S-adenosyl-L-methionine = N(6)-dimethyladenosine(1518)/N(6)-dimethyladenosine(1519) in 16S rRNA + 4 S-adenosyl-L-homocysteine + 4 H(+). Specifically dimethylates two adjacent adenosines (A1518 and A1519) in the loop of a conserved hairpin near the 3'-end of 16S rRNA in the 30S particle. May play a critical role in biogenesis of 30S subunits. The polypeptide is Ribosomal RNA small subunit methyltransferase A (Prochlorococcus marinus (strain SARG / CCMP1375 / SS120)).